Reading from the N-terminus, the 511-residue chain is Xylose import ATP-binding protein XylG (511 aa).

2 ABC transporter domains span residues L6–E244 and F261–P506. G38 to S45 lines the ATP pocket.

This sequence belongs to the ABC transporter superfamily. Xylose importer (TC 3.A.1.2.4) family. As to quaternary structure, the complex is composed of two ATP-binding proteins (XylG), two transmembrane proteins (XylH) and a solute-binding protein (XylF).

It is found in the cell inner membrane. The enzyme catalyses D-xylose(out) + ATP + H2O = D-xylose(in) + ADP + phosphate + H(+). Functionally, part of the ABC transporter complex XylFGH involved in xylose import. Responsible for energy coupling to the transport system. This chain is Xylose import ATP-binding protein XylG, found in Brucella abortus (strain 2308).